We begin with the raw amino-acid sequence, 222 residues long: Triosephosphate isomerase (222 aa).

Residue Asn-9–Lys-11 participates in substrate binding. His-93 functions as the Electrophile in the catalytic mechanism. Glu-141 functions as the Proton acceptor in the catalytic mechanism. Substrate contacts are provided by residues Ile-146, Gly-181, and Ala-202–Ser-203.

Belongs to the triosephosphate isomerase family. Homotetramer; dimer of dimers.

The protein localises to the cytoplasm. It carries out the reaction D-glyceraldehyde 3-phosphate = dihydroxyacetone phosphate. It participates in carbohydrate biosynthesis; gluconeogenesis. Its pathway is carbohydrate degradation; glycolysis; D-glyceraldehyde 3-phosphate from glycerone phosphate: step 1/1. Functionally, involved in the gluconeogenesis. Catalyzes stereospecifically the conversion of dihydroxyacetone phosphate (DHAP) to D-glyceraldehyde-3-phosphate (G3P). The chain is Triosephosphate isomerase from Methanobrevibacter smithii (strain ATCC 35061 / DSM 861 / OCM 144 / PS).